The primary structure comprises 435 residues: WD repeat domain phosphoinositide-interacting protein 2 (435 aa).

A WD 1 repeat occupies 182 to 222; sequence AHDSPLAALAFDASGTKLATASEKGTVIRVFSIPEGQKLFE. Positions 223-226 match the L/FRRG motif motif; the sequence is FRRG. WD repeat units lie at residues 228–267 and 311–349; these read KRCVSICSLAFSMDSIFLSASSNTETVHIFKLETIKEKPP and GHKNICALATIQKISRLLVGAADGYLYIYNFDPQEGGEC. Positions 386–435 are disordered; it reads VTKTYPPPSPTRHAYADDLGAVGGASEEDEMGNLRLDEDNENPPMILQTE.

Belongs to the WD repeat PROPPIN family.

The protein localises to the preautophagosomal structure membrane. In terms of biological role, component of the autophagy machinery that controls the major intracellular degradation process by which cytoplasmic materials are packaged into autophagosomes and delivered to lysosomes for degradation. Involved in an early step of the formation of preautophagosomal structures. The sequence is that of WD repeat domain phosphoinositide-interacting protein 2 (wipi2) from Xenopus laevis (African clawed frog).